We begin with the raw amino-acid sequence, 171 residues long: Cytochrome c oxidase subunit 4 isoform 2, mitochondrial (171 aa).

A mitochondrion-targeting transit peptide spans 1 to 28 (MLPRAAWSLVLRKGGGGRRGMHSSEGTT). The segment at 13–32 (KGGGGRRGMHSSEGTTRGGG) is disordered. At 29-100 (RGGGKMSPYT…TFAEMNRRSN (72 aa)) the chain is on the mitochondrial matrix side. A helical membrane pass occupies residues 101-126 (EWKTVMGCVFFFIGFAALVIWWQRVY). The Mitochondrial intermembrane portion of the chain corresponds to 127 to 171 (VFPPKPITLTDERKAQQLQRMLDMKVNPVQGLASRWDYEKKQWKK).

This sequence belongs to the cytochrome c oxidase IV family. As to quaternary structure, component of the cytochrome c oxidase (complex IV, CIV), a multisubunit enzyme composed of 14 subunits. The complex is composed of a catalytic core of 3 subunits MT-CO1, MT-CO2 and MT-CO3, encoded in the mitochondrial DNA, and 11 supernumerary subunits COX4I1 (or COX4I2), COX5A, COX5B, COX6A1 (or COX6A2), COX6B1 (or COX6B2), COX6C, COX7A2 (or COX7A1), COX7B, COX7C, COX8A and NDUFA4, which are encoded in the nuclear genome. The complex exists as a monomer or a dimer and forms supercomplexes (SCs) in the inner mitochondrial membrane with NADH-ubiquinone oxidoreductase (complex I, CI) and ubiquinol-cytochrome c oxidoreductase (cytochrome b-c1 complex, complex III, CIII), resulting in different assemblies (supercomplex SCI(1)III(2)IV(1) and megacomplex MCI(2)III(2)IV(2)). As to expression, highly expressed in lung.

Its subcellular location is the mitochondrion inner membrane. It participates in energy metabolism; oxidative phosphorylation. Functionally, component of the cytochrome c oxidase, the last enzyme in the mitochondrial electron transport chain which drives oxidative phosphorylation. The respiratory chain contains 3 multisubunit complexes succinate dehydrogenase (complex II, CII), ubiquinol-cytochrome c oxidoreductase (cytochrome b-c1 complex, complex III, CIII) and cytochrome c oxidase (complex IV, CIV), that cooperate to transfer electrons derived from NADH and succinate to molecular oxygen, creating an electrochemical gradient over the inner membrane that drives transmembrane transport and the ATP synthase. Cytochrome c oxidase is the component of the respiratory chain that catalyzes the reduction of oxygen to water. Electrons originating from reduced cytochrome c in the intermembrane space (IMS) are transferred via the dinuclear copper A center (CU(A)) of subunit 2 and heme A of subunit 1 to the active site in subunit 1, a binuclear center (BNC) formed by heme A3 and copper B (CU(B)). The BNC reduces molecular oxygen to 2 water molecules using 4 electrons from cytochrome c in the IMS and 4 protons from the mitochondrial matrix. The chain is Cytochrome c oxidase subunit 4 isoform 2, mitochondrial from Homo sapiens (Human).